Here is a 623-residue protein sequence, read N- to C-terminus: Procollagen galactosyltransferase 1 (623 aa).

The signal sequence occupies residues 1–30; the sequence is MAAAPRACKGHGRPLPVLLLLLLLALPPLG. N97, N185, and N382 each carry an N-linked (GlcNAc...) asparagine glycan. Over residues 589–607 the composition is skewed to basic and acidic residues; sequence RAKSQKMREQQALSREAKN. Residues 589 to 623 form a disordered region; the sequence is RAKSQKMREQQALSREAKNSDVLQSPLDSAARDEL. The Prevents secretion from ER signature appears at 620-623; sequence RDEL.

Belongs to the glycosyltransferase 25 family. Post-translationally, N-glycosylated.

It is found in the endoplasmic reticulum lumen. The enzyme catalyses (5R)-5-hydroxy-L-lysyl-[collagen] + UDP-alpha-D-galactose = (5R)-5-O-(beta-D-galactosyl)-5-hydroxy-L-lysyl-[collagen] + UDP + H(+). Beta-galactosyltransferase that transfers beta-galactose to hydroxylysine residues of type I collagen. By acting on collagen glycosylation, facilitates the formation of collagen triple helix. Also involved in the biosynthesis of collagen type IV. The chain is Procollagen galactosyltransferase 1 (COLGALT1) from Bos taurus (Bovine).